The primary structure comprises 617 residues: ATP-dependent RNA helicase DBP1 (617 aa).

The segment at 1–90 (MADLPQKVSN…TSANYNRGGS (90 aa)) is disordered. Residues 7–17 (KVSNLSINNKE) show a composition bias toward polar residues. The span at 38–58 (PSFERSTPKQEDKVTGGDFFR) shows a compositional bias: basic and acidic residues. Residues 79–90 (GGTSANYNRGGS) are compositionally biased toward polar residues. Residues 154–182 (LDFSSPPLDELLMENIKLASFTKPTPVQK) carry the Q motif motif. The 190-residue stretch at 185 to 374 (IPIVTKGRDL…RDFLDNYIFL (190 aa)) folds into the Helicase ATP-binding domain. 198–205 (AQTGSGKT) is an ATP binding site. The DEAD box motif lies at 318–321 (DEAD). The Helicase C-terminal domain occupies 385–545 (NITQRILYVD…EVPTFLSDLS (161 aa)). The tract at residues 542–617 (SDLSRQNSRG…GYGNSNASWW (76 aa)) is disordered. Residues 580 to 594 (FGSTRPRNTGTSNWG) show a composition bias toward polar residues.

The protein belongs to the DEAD box helicase family. DDX3/DED1 subfamily.

Its subcellular location is the cytoplasm. The catalysed reaction is ATP + H2O = ADP + phosphate + H(+). Its function is as follows. ATP-binding RNA helicase involved in translation initiation. Remodels RNA in response to ADP and ATP concentrations by facilitating disruption, but also formation of RNA duplexes. Redundant to DED1, may be required in conditions in which DED1 expression is decreased. The protein is ATP-dependent RNA helicase DBP1 (DBP1) of Saccharomyces cerevisiae (strain YJM789) (Baker's yeast).